We begin with the raw amino-acid sequence, 376 residues long: Heme-dependent oxidative N-demethylase gamma subunit (376 aa).

In terms of assembly, the heme-dependent oxidative N-demethylase (HODM) is a heterotetramer composed of a catalytic alpha subunit, a FMN/2Fe-2S-dependent oxidoreductase beta subunit, a gamma subunit with putative aminotransferase activity, and a delta subunit of unknown function.

Its function is as follows. Component of the heme-dependent oxidative N-demethylase (HODM) enzyme, that catalyzes the NADPH-dependent oxidation of dimethylamine (DMA) to methylamine (MA) and formaldehyde. Functions in bacterial methylated amine catabolism, linking alkylamine oxidation to the tetrahydrofolate C1 pool. The gamma subunit of HODM may act as an aminomethyltransferase involved in the detoxification of formaldehyde released by the alpha subunit; this process requires tetrahydrofolate (THF). The polypeptide is Heme-dependent oxidative N-demethylase gamma subunit (Ectopseudomonas mendocina (strain ymp) (Pseudomonas mendocina)).